The sequence spans 326 residues: Vomeronasal type-1 receptor 100 (326 aa).

At 1-32 (MSEFPFFSPQPLFSYMMNKNSRVHTDSNIRNT) the chain is on the extracellular side. Residues 33-53 (FFTEIGIGILANSFLLLFHIF) traverse the membrane as a helical segment. The Cytoplasmic portion of the chain corresponds to 54 to 70 (KFIRGQRSRLTDLPIGL). The helical transmembrane segment at 71 to 91 (LSLIHLLMLLMGAFIAIDIFI) threads the bilayer. The Extracellular segment spans residues 92 to 104 (SWRGWDDIICKFL). C101 and C188 form a disulfide bridge. Residues 105 to 127 (VYLYRSFRGLSLCTTCMLSVLQA) form a helical membrane-spanning segment. Residues 128–149 (ITLSPRSSCLAKFKHKSPHHVS) are Cytoplasmic-facing. The chain crosses the membrane as a helical span at residues 150 to 170 (CAIISLSILYMFISSHLLVSI). The Extracellular portion of the chain corresponds to 171-209 (NATPNLTTNNFMQVTQSCYIIPLSYLMQSMFSTLLAIRD). Residue N175 is glycosylated (N-linked (GlcNAc...) asparagine). Residues 210-230 (ISLISLMVLSTCYMVVLLCRH) form a helical membrane-spanning segment. The Cytoplasmic portion of the chain corresponds to 231-254 (RNQIQHLQGTNLSPKASPEQRATQ). The helical transmembrane segment at 255 to 275 (TILMLMTFFVLMSIFDSIVSC) threads the bilayer. Topologically, residues 276-285 (SRTMYLNDPT) are extracellular. Residues 286 to 306 (SYYIQIFVVYIYATVSPFVFM) form a helical membrane-spanning segment. Over 307–326 (STEKHIVNFLKSMCVRVKNV) the chain is Cytoplasmic.

It belongs to the G-protein coupled receptor 1 family. Expressed in 1-4% of neurons of the vomeronasal organ. Only one pheromone receptor gene may be expressed in a particular neuron. Not expressed in the main olfactory epithelium.

It is found in the cell membrane. In terms of biological role, putative pheromone receptor implicated in the regulation of social as well as reproductive behavior. This is Vomeronasal type-1 receptor 100 (Vom1r100) from Rattus norvegicus (Rat).